The chain runs to 266 residues: 5'-nucleotidase SurE (266 aa).

A divalent metal cation contacts are provided by Asp8, Asp9, Ser39, and Asn95.

It belongs to the SurE nucleotidase family. Requires a divalent metal cation as cofactor.

The protein resides in the cytoplasm. The enzyme catalyses a ribonucleoside 5'-phosphate + H2O = a ribonucleoside + phosphate. Its function is as follows. Nucleotidase that shows phosphatase activity on nucleoside 5'-monophosphates. The chain is 5'-nucleotidase SurE from Syntrophus aciditrophicus (strain SB).